A 120-amino-acid chain; its full sequence is BLOC-1-related complex subunit 8 (120 aa).

The interval 101–120 (MNTSAQGHSQEKLSPPPSLA) is disordered. S109 bears the Phosphoserine mark.

Belongs to the BORCS8 family. In terms of assembly, component of the BLOC-one-related complex (BORC) which is composed of BLOC1S1, BLOC1S2, BORCS5, BORCS6, BORCS7, BORCS8, KXD1 and SNAPIN.

It localises to the lysosome membrane. Its function is as follows. As part of the BLOC-one-related complex (BORC), it plays a role in the movement and localization of lysosomes at the cell periphery. Associated with the cytosolic face of lysosomes, BORC recruits ARL8B to the lysosomal membrane and couples lysosomes to microtubule plus-end-directed kinesin motors, driving lysosome movement toward the cell periphery. The polypeptide is BLOC-1-related complex subunit 8 (Mus musculus (Mouse)).